The following is a 391-amino-acid chain: S-adenosylmethionine synthase (391 aa).

ATP is bound at residue His19. Asp21 contacts Mg(2+). Glu47 lines the K(+) pocket. L-methionine-binding residues include Glu60 and Gln103. Residues Gln103–Arg113 are flexible loop. ATP-binding positions include Asp168–Lys170, Arg236–Phe237, Asp245, Arg251–Lys252, Ala268, and Lys272. Asp245 contributes to the L-methionine binding site. Lys276 serves as a coordination point for L-methionine.

This sequence belongs to the AdoMet synthase family. In terms of assembly, homotetramer; dimer of dimers. Requires Mg(2+) as cofactor. K(+) serves as cofactor.

It is found in the cytoplasm. It carries out the reaction L-methionine + ATP + H2O = S-adenosyl-L-methionine + phosphate + diphosphate. The protein operates within amino-acid biosynthesis; S-adenosyl-L-methionine biosynthesis; S-adenosyl-L-methionine from L-methionine: step 1/1. In terms of biological role, catalyzes the formation of S-adenosylmethionine (AdoMet) from methionine and ATP. The overall synthetic reaction is composed of two sequential steps, AdoMet formation and the subsequent tripolyphosphate hydrolysis which occurs prior to release of AdoMet from the enzyme. This chain is S-adenosylmethionine synthase, found in Nitratidesulfovibrio vulgaris (strain ATCC 29579 / DSM 644 / CCUG 34227 / NCIMB 8303 / VKM B-1760 / Hildenborough) (Desulfovibrio vulgaris).